A 698-amino-acid polypeptide reads, in one-letter code: MOXD1 homolog 1 (698 aa).

Positions 1 to 20 are cleaved as a signal peptide; that stretch reads MSVQDVLWIVLTVQLSFGLA. Residues N36, N140, and N221 are each glycosylated (N-linked (GlcNAc...) asparagine). The region spanning 54–174 is the DOMON domain; it reads GLYWLKWWIN…DTFKVLWSIG (121 aa). Y232 is a catalytic residue. Residues H265 and H266 each contribute to the Cu cation site. Residues C272 and C309 are joined by a disulfide bond. Cu cation is bound by residues H347, H425, and H427. 2 disulfides stabilise this stretch: C403-C516 and C479-C501. H425 is an active-site residue. N465 carries an N-linked (GlcNAc...) asparagine glycan. A Cu cation-binding site is contributed by M500. Residues N538 and N561 are each glycosylated (N-linked (GlcNAc...) asparagine).

It belongs to the copper type II ascorbate-dependent monooxygenase family. It depends on Cu(2+) as a cofactor.

The protein resides in the secreted. In Drosophila melanogaster (Fruit fly), this protein is MOXD1 homolog 1.